Here is a 95-residue protein sequence, read N- to C-terminus: LSM complex subunit LSM2 (95 aa).

In terms of domain architecture, Sm spans 2–76; sequence LFFSFFKTLV…VRYVYLNKNM (75 aa).

It belongs to the snRNP Sm proteins family. As to quaternary structure, component of the heptameric LSM1-LSM7 complex that forms a seven-membered ring structure with a donut shape. The LSm subunits are arranged in the order LSM1, LSM2, LSM3, LSM6, LSM5, LSM7 and LSM4. Except for LSM1, where a C-terminal helix crosses the ring structure to form additional interactions with LSM3 and LSM6, each subunit interacts only with its two neighboring subunits. The LSM1-LSM7 complex interacts with PAT1; within the complex PAT1 has direct interactions with LSM2 and LSM3. The LSM1-LSM7 complex interacts with XRN1. Component of the heptameric LSM2-LSM8 complex that forms a seven-membered ring structure with a donut shape; an RNA strand can pass through the hole in the center of the ring structure. The LSm subunits are arranged in the order LSM8, LSM2, LSM3, LSM6, LSM5, LSM7 and LSM4. Interacts with U6 snRNA SNR6 and chaperone PRP24; to promote formation of the U4/U6-U5 tri-snRNP (small nuclear ribonucleoprotein) complex, the LSM2-LSM8 complex preferentially binds U6 snRNA that has been modified to contain a non-cyclic 3' phosphate. Component of the spliceosome U4/U6-U5 tri-snRNP complex composed of the U4, U6 and U5 snRNAs and at least PRP3, PRP4, PRP6, PRP8, PRP18, PRP31, PRP38, SNU13, SNU23, SNU66, SNU114, SPP381, SMB1, SMD1, SMD2, SMD3, SMX2, SMX3, LSM2, LSM3, LSM4, LSM5, LSM6, LSM7, LSM8, BRR2 and DIB1. May be found in a complex comprising LSM2-LSM7 without LSM1 or LSM8; the complex associates with pre-P RNA and snoRNA SNR5.

Its subcellular location is the nucleus. The protein localises to the nucleolus. It localises to the cytoplasm. Component of LSm protein complexes, which are involved in RNA processing and may function in a chaperone-like manner. Component of the cytoplasmic LSM1-LSM7 complex which is involved in mRNA degradation by activating the decapping step. Together with PAT1, the LSM1-LSM7 complex binds to osmotic stress-activated mRNAs to attenuate the osmotic stress response, probably by limiting ribosome access to the mRNA and consequently translation. Component of the nuclear LSM2-LSM8 complex, which is involved in spliceosome assembly. The LSM2-LSM8 complex plays a role in the biogenesis of the spliceosomal U4/U6-U5 tri-snRNP complex by accelerating PRP24-mediated annealing of U4/U6 di-snRNA. The LSM2-LSM8 complex binds U6 snRNA terminating with a non-cyclic 3' phosphate group. LSM2-LSM8 is probably also involved in degradation of nuclear pre-mRNA by targeting them for decapping. LSM2-LSM8 could be involved in processing of pre-tRNAs, pre-rRNAs and U3 snoRNA, although involvement may be indirect. In a complex that probably contains LSM2-LSM7, but not LSM1 or LSM8, associates with the precursor of the RNA component of RNase P (pre-P RNA) and may be involved in maturing pre-P RNA; the complex also associates with snoRNA SNR5. This chain is LSM complex subunit LSM2 (LSM2), found in Saccharomyces cerevisiae (strain ATCC 204508 / S288c) (Baker's yeast).